Consider the following 116-residue polypeptide: Ribosome-binding factor A (116 aa).

It belongs to the RbfA family. As to quaternary structure, monomer. Binds 30S ribosomal subunits, but not 50S ribosomal subunits or 70S ribosomes.

The protein resides in the cytoplasm. Functionally, one of several proteins that assist in the late maturation steps of the functional core of the 30S ribosomal subunit. Associates with free 30S ribosomal subunits (but not with 30S subunits that are part of 70S ribosomes or polysomes). Required for efficient processing of 16S rRNA. May interact with the 5'-terminal helix region of 16S rRNA. The sequence is that of Ribosome-binding factor A from Ureaplasma parvum serovar 3 (strain ATCC 27815 / 27 / NCTC 11736).